The chain runs to 491 residues: 23S rRNA (uracil(1939)-C(5))-methyltransferase RlmD (491 aa).

Positions 1 to 10 are enriched in basic and acidic residues; it reads MSDPTEHPEI. A disordered region spans residues 1–28; it reads MSDPTEHPEILQDPSSSAPVQGRTDLPP. A TRAM domain is found at 18 to 81; the sequence is APVQGRTDLP…NNWEQASLTA (64 aa). [4Fe-4S] cluster is bound by residues cysteine 94, cysteine 104, cysteine 107, and cysteine 186. Residues glutamine 294, phenylalanine 323, asparagine 328, glutamate 344, asparagine 379, and aspartate 400 each coordinate S-adenosyl-L-methionine. Catalysis depends on cysteine 447, which acts as the Nucleophile.

It belongs to the class I-like SAM-binding methyltransferase superfamily. RNA M5U methyltransferase family. RlmD subfamily.

It catalyses the reaction uridine(1939) in 23S rRNA + S-adenosyl-L-methionine = 5-methyluridine(1939) in 23S rRNA + S-adenosyl-L-homocysteine + H(+). In terms of biological role, catalyzes the formation of 5-methyl-uridine at position 1939 (m5U1939) in 23S rRNA. The chain is 23S rRNA (uracil(1939)-C(5))-methyltransferase RlmD from Paracidovorax citrulli (strain AAC00-1) (Acidovorax citrulli).